The chain runs to 163 residues: ATP synthase subunit b (163 aa).

The helical transmembrane segment at 1 to 21 threads the bilayer; it reads MISFNLTSIVNLVGFLAFMFL.

The protein belongs to the ATPase B chain family. As to quaternary structure, F-type ATPases have 2 components, F(1) - the catalytic core - and F(0) - the membrane proton channel. F(1) has five subunits: alpha(3), beta(3), gamma(1), delta(1), epsilon(1). F(0) has three main subunits: a(1), b(2) and c(10-14). The alpha and beta chains form an alternating ring which encloses part of the gamma chain. F(1) is attached to F(0) by a central stalk formed by the gamma and epsilon chains, while a peripheral stalk is formed by the delta and b chains.

Its subcellular location is the cell inner membrane. F(1)F(0) ATP synthase produces ATP from ADP in the presence of a proton or sodium gradient. F-type ATPases consist of two structural domains, F(1) containing the extramembraneous catalytic core and F(0) containing the membrane proton channel, linked together by a central stalk and a peripheral stalk. During catalysis, ATP synthesis in the catalytic domain of F(1) is coupled via a rotary mechanism of the central stalk subunits to proton translocation. Its function is as follows. Component of the F(0) channel, it forms part of the peripheral stalk, linking F(1) to F(0). The polypeptide is ATP synthase subunit b (Petrotoga mobilis (strain DSM 10674 / SJ95)).